The sequence spans 320 residues: Putative malonate transporter (320 aa).

8 consecutive transmembrane segments (helical) span residues 1–21, 32–52, 65–85, 113–133, 167–187, 196–216, 256–276, and 289–309; these read MAEI…GYLT, MGWL…FKLV, FILT…AIGL, GLAL…IFCF, IAFH…FLSF, LIDY…GVTL, IWVQ…VFVI, and ATIL…LYLI.

The protein belongs to the auxin efflux carrier (TC 2.A.69) family.

Its subcellular location is the cell membrane. This is Putative malonate transporter (mdcF) from Rhizobium meliloti (strain 1021) (Ensifer meliloti).